Here is a 251-residue protein sequence, read N- to C-terminus: Ubiquinone/menaquinone biosynthesis C-methyltransferase UbiE (251 aa).

S-adenosyl-L-methionine is bound by residues threonine 74, aspartate 95, and asparagine 123–alanine 124.

This sequence belongs to the class I-like SAM-binding methyltransferase superfamily. MenG/UbiE family.

The enzyme catalyses a 2-demethylmenaquinol + S-adenosyl-L-methionine = a menaquinol + S-adenosyl-L-homocysteine + H(+). It carries out the reaction a 2-methoxy-6-(all-trans-polyprenyl)benzene-1,4-diol + S-adenosyl-L-methionine = a 5-methoxy-2-methyl-3-(all-trans-polyprenyl)benzene-1,4-diol + S-adenosyl-L-homocysteine + H(+). It participates in quinol/quinone metabolism; menaquinone biosynthesis; menaquinol from 1,4-dihydroxy-2-naphthoate: step 2/2. It functions in the pathway cofactor biosynthesis; ubiquinone biosynthesis. Its function is as follows. Methyltransferase required for the conversion of demethylmenaquinol (DMKH2) to menaquinol (MKH2) and the conversion of 2-polyprenyl-6-methoxy-1,4-benzoquinol (DDMQH2) to 2-polyprenyl-3-methyl-6-methoxy-1,4-benzoquinol (DMQH2). The polypeptide is Ubiquinone/menaquinone biosynthesis C-methyltransferase UbiE (Edwardsiella ictaluri (strain 93-146)).